Reading from the N-terminus, the 402-residue chain is Phosphoglycerate kinase (402 aa).

Residues aspartate 24–asparagine 26, arginine 39, histidine 62–arginine 65, arginine 121, and arginine 161 each bind substrate. ATP is bound by residues lysine 211, glycine 299, glutamate 330, and glycine 359–serine 362.

Belongs to the phosphoglycerate kinase family. As to quaternary structure, monomer.

The protein localises to the cytoplasm. The enzyme catalyses (2R)-3-phosphoglycerate + ATP = (2R)-3-phospho-glyceroyl phosphate + ADP. It functions in the pathway carbohydrate degradation; glycolysis; pyruvate from D-glyceraldehyde 3-phosphate: step 2/5. This chain is Phosphoglycerate kinase, found in Mycolicibacterium gilvum (strain PYR-GCK) (Mycobacterium gilvum (strain PYR-GCK)).